A 355-amino-acid polypeptide reads, in one-letter code: Probable butyrate kinase (355 aa).

It belongs to the acetokinase family.

Its subcellular location is the cytoplasm. It catalyses the reaction butanoate + ATP = butanoyl phosphate + ADP. In Clostridium botulinum (strain Eklund 17B / Type B), this protein is Probable butyrate kinase.